The primary structure comprises 122 residues: Large ribosomal subunit protein uL14 (122 aa).

The protein belongs to the universal ribosomal protein uL14 family. As to quaternary structure, part of the 50S ribosomal subunit. Forms a cluster with proteins L3 and L19. In the 70S ribosome, L14 and L19 interact and together make contacts with the 16S rRNA in bridges B5 and B8.

Binds to 23S rRNA. Forms part of two intersubunit bridges in the 70S ribosome. In Exiguobacterium sibiricum (strain DSM 17290 / CCUG 55495 / CIP 109462 / JCM 13490 / 255-15), this protein is Large ribosomal subunit protein uL14.